We begin with the raw amino-acid sequence, 172 residues long: uncharacterized protein (172 aa).

4 helical membrane passes run 20-40 (LVLITISIIALSTAYIAEYIF), 48-68 (CVYERFPYLMLIKISLTALII), 76-96 (LILILITILSSCILSTYHSFV), and 146-166 (MTEYNLLLNICLLIFLGLILF).

It is found in the cell membrane. This is an uncharacterized protein from Rickettsia prowazekii (strain Madrid E).